Here is an 846-residue protein sequence, read N- to C-terminus: Neurotactin (846 aa).

The tract at residues 1 to 222 (MGELEEKETP…EDASDAPPKR (222 aa)) is disordered. The Cytoplasmic portion of the chain corresponds to 1-324 (MGELEEKETP…LRGYKCSVDD (324 aa)). Residues 11–20 (PTETTAAQQE) are compositionally biased toward low complexity. Over residues 23–42 (EEPKETDKMLDKKEDAKEKT) the composition is skewed to basic and acidic residues. Thr-28 carries the post-translational modification Phosphothreonine; by PKC. The residue at position 42 (Thr-42) is a Phosphothreonine. The residue at position 44 (Ser-44) is a Phosphoserine. Thr-47 is subject to Phosphothreonine. Residues Ser-48 and Ser-52 each carry the phosphoserine modification. Positions 63 to 74 (AEKKIDDAELAK) are enriched in basic and acidic residues. Residue Ser-75 is modified to Phosphoserine; by PKC. Phosphoserine is present on Ser-77. 4 stretches are compositionally biased toward basic and acidic residues: residues 95 to 111 (DSAD…EVKP), 141 to 155 (LLEK…KEAN), 163 to 178 (GKDE…ERLR), and 185 to 205 (PSAE…KSEA). Ser-103 carries the post-translational modification Phosphoserine; by PKC. A Phosphoserine; by PKC modification is found at Ser-169. 2 positions are modified to phosphoserine: Ser-186 and Ser-203. Position 206 is a phosphothreonine (Thr-206). A Phosphoserine modification is found at Ser-256. Residue Thr-259 is modified to Phosphothreonine. Ser-263 is subject to Phosphoserine. Position 269 is a phosphothreonine (Thr-269). The chain crosses the membrane as a helical; Signal-anchor for type II membrane protein span at residues 325 to 346 (ALIVFGILLFVLLLGVIGYVLT). Topologically, residues 347–846 (HETLTSPPLR…DIVPRYARVD (500 aa)) are extracellular. Asn-410, Asn-417, and Asn-428 each carry an N-linked (GlcNAc...) asparagine glycan. 2 disulfides stabilise this stretch: Cys-422–Cys-437 and Cys-600–Cys-605. N-linked (GlcNAc...) asparagine glycosylation is found at Asn-636, Asn-691, and Asn-720. Cys-738 and Cys-830 are oxidised to a cystine.

It in the C-terminal section; belongs to the type-B carboxylesterase/lipase family. Late in embryogenesis, expression is restricted to cells of the peripheral and central nervous system undergoing proliferation and differentiation. Also expressed in larval CNS, mesoderm and imaginal disks.

The protein resides in the membrane. Functionally, may mediate or modulate cell adhesion between embryonic cells during development. This is Neurotactin (Nrt) from Drosophila melanogaster (Fruit fly).